The primary structure comprises 291 residues: 2-dehydro-3-deoxyphosphooctonate aldolase 2 (291 aa).

Alanine 2 carries the post-translational modification N-acetylalanine.

This sequence belongs to the KdsA family. Expressed in roots, apical meristem, emerging leaves, hydathodes of young leaves, styles of mature flowers and funicules of mature siliques.

The protein localises to the cytoplasm. It catalyses the reaction D-arabinose 5-phosphate + phosphoenolpyruvate + H2O = 3-deoxy-alpha-D-manno-2-octulosonate-8-phosphate + phosphate. Catalyzes the stereospecific condensation of D-arabinose 5-phosphate and phosphoenolpyruvate to form 3-deoxy-D-manno-octulosonate 8-phosphate (KDO-8-phosphate) and inorganic phosphate. Involved in the biosynthesis of 3-deoxy-D-manno-octulosonate (KDO) which is an indispensable component of rhamnogalacturonan II (RG-II), a structurally complex pectic polysaccharide of the primary cell wall. RG-II is essential for the cell wall integrity of rapidly growing tissues and pollen tube growth and elongation. This is 2-dehydro-3-deoxyphosphooctonate aldolase 2 (KDSA2) from Arabidopsis thaliana (Mouse-ear cress).